A 530-amino-acid polypeptide reads, in one-letter code: MFS transporter PfmaC (530 aa).

Residues 41–76 (TTAVSDGDNQSSTMSGKTAAGDATSPASGSGSGGWF) are disordered. Residues 42 to 56 (TAVSDGDNQSSTMSG) are compositionally biased toward polar residues. A compositionally biased stretch (low complexity) spans 59–69 (AAGDATSPASG). The next 10 membrane-spanning stretches (helical) occupy residues 165-182 (YWLP…LGMY), 195-215 (FFIG…LGCW), 226-246 (ALFV…QAAL), 261-281 (WLFI…LFCF), 324-344 (IFTS…SLTV), 369-389 (NIPT…GFVS), 396-416 (GPVC…FTAW), 422-442 (LLMA…LLAG), 456-476 (AFIL…FQQL), and 493-513 (PSAL…IPLL).

It belongs to the major facilitator superfamily. Allantoate permease family.

The protein localises to the cell membrane. MFS transporter; part of the gene cluster that mediates the biosynthesis of dihydroxynaphthalene (DHN)-melanin, a bluish-green pigment forming a dark layer in the conidial wall that protects the conidia from UV radiations. This is MFS transporter PfmaC from Pestalotiopsis fici (strain W106-1 / CGMCC3.15140).